We begin with the raw amino-acid sequence, 514 residues long: 3-octaprenyl-4-hydroxybenzoate carboxy-lyase (514 aa).

Mn(2+) is bound at residue Asn-177. Residues 180 to 182, 194 to 196, and 199 to 200 contribute to the prenylated FMN site; these read IYR, RWL, and RG. Glu-243 contacts Mn(2+). Asp-314 acts as the Proton donor in catalysis.

Belongs to the UbiD family. Homohexamer. The cofactor is prenylated FMN. Mn(2+) is required as a cofactor.

It is found in the cell membrane. It carries out the reaction a 4-hydroxy-3-(all-trans-polyprenyl)benzoate + H(+) = a 2-(all-trans-polyprenyl)phenol + CO2. It participates in cofactor biosynthesis; ubiquinone biosynthesis. Its function is as follows. Catalyzes the decarboxylation of 3-octaprenyl-4-hydroxy benzoate to 2-octaprenylphenol, an intermediate step in ubiquinone biosynthesis. The polypeptide is 3-octaprenyl-4-hydroxybenzoate carboxy-lyase (Bordetella parapertussis (strain 12822 / ATCC BAA-587 / NCTC 13253)).